The sequence spans 109 residues: Nucleoid-associated protein CKO_02678 (109 aa).

The segment at 89 to 109 is disordered; the sequence is KEKMASVSSGMQLPPGFKMPF.

Belongs to the YbaB/EbfC family. Homodimer.

Its subcellular location is the cytoplasm. It localises to the nucleoid. Binds to DNA and alters its conformation. May be involved in regulation of gene expression, nucleoid organization and DNA protection. The polypeptide is Nucleoid-associated protein CKO_02678 (Citrobacter koseri (strain ATCC BAA-895 / CDC 4225-83 / SGSC4696)).